Here is a 177-residue protein sequence, read N- to C-terminus: Large ribosomal subunit protein uL6 (177 aa).

The protein belongs to the universal ribosomal protein uL6 family. As to quaternary structure, part of the 50S ribosomal subunit.

Functionally, this protein binds to the 23S rRNA, and is important in its secondary structure. It is located near the subunit interface in the base of the L7/L12 stalk, and near the tRNA binding site of the peptidyltransferase center. This Colwellia psychrerythraea (strain 34H / ATCC BAA-681) (Vibrio psychroerythus) protein is Large ribosomal subunit protein uL6.